Here is an 83-residue protein sequence, read N- to C-terminus: Small ribosomal subunit protein bS20 (83 aa).

The segment at 1–25 (MPNIKSAIKRVNTTHTAEERNISQK) is disordered. The segment covering 16–25 (TAEERNISQK) has biased composition (basic and acidic residues).

It belongs to the bacterial ribosomal protein bS20 family.

Its function is as follows. Binds directly to 16S ribosomal RNA. The chain is Small ribosomal subunit protein bS20 from Staphylococcus saprophyticus subsp. saprophyticus (strain ATCC 15305 / DSM 20229 / NCIMB 8711 / NCTC 7292 / S-41).